Reading from the N-terminus, the 545-residue chain is Indole-3-pyruvate decarboxylase (545 aa).

Thiamine diphosphate is bound at residue glutamate 48. Residues aspartate 382–glutamate 460 form a thiamine pyrophosphate binding region. The Mg(2+) site is built by aspartate 429 and asparagine 456.

It belongs to the TPP enzyme family. The cofactor is a metal cation. It depends on thiamine diphosphate as a cofactor.

It carries out the reaction indole-3-pyruvate + H(+) = indole-3-acetaldehyde + CO2. The protein operates within plant hormone metabolism; auxin biosynthesis. The polypeptide is Indole-3-pyruvate decarboxylase (ipdC) (Azospirillum brasilense).